The chain runs to 652 residues: Type III restriction-modification enzyme StyLTI Mod subunit (652 aa).

A binding of S-adenosyl methionine region spans residues 135-138; sequence DPPY.

It belongs to the N(4)/N(6)-methyltransferase family. Homodimer, also forms a functional restriction-competent complex with Res.

The enzyme catalyses a 2'-deoxyadenosine in DNA + S-adenosyl-L-methionine = an N(6)-methyl-2'-deoxyadenosine in DNA + S-adenosyl-L-homocysteine + H(+). Functionally, a beta subtype methylase that binds the system-specific DNA recognition site 5'-CAGAG-3' and methylates A-4 (of only 1 strand as the other does not have an A residue). DNA restriction requires both the Res and Mod subunits. The protein is Type III restriction-modification enzyme StyLTI Mod subunit of Salmonella typhimurium (strain LT2 / SGSC1412 / ATCC 700720).